Here is a 444-residue protein sequence, read N- to C-terminus: Enolase 2 (444 aa).

2 residues coordinate substrate: histidine 165 and glutamate 174. The active-site Proton donor is glutamate 217. The Mg(2+) site is built by aspartate 252, glutamate 303, and aspartate 330. Substrate-binding residues include glutamate 303 and aspartate 330. Lysine 355 acts as the Proton acceptor in catalysis. Residues 382–385 and lysine 406 contribute to the substrate site; that span reads SHRS.

Belongs to the enolase family. In terms of assembly, homodimer. It depends on Mg(2+) as a cofactor.

It is found in the cytoplasm. It catalyses the reaction (2R)-2-phosphoglycerate = phosphoenolpyruvate + H2O. The protein operates within carbohydrate degradation; glycolysis; pyruvate from D-glyceraldehyde 3-phosphate: step 4/5. This is Enolase 2 (ENO2) from Toxoplasma gondii.